Consider the following 275-residue polypeptide: Autophagy protein 5 (275 aa).

The residue at position 1 (M1) is an N-acetylmethionine. A Glycyl lysine isopeptide (Lys-Gly) (interchain with G-Cter in ATG12) cross-link involves residue K130.

The protein belongs to the ATG5 family. As to quaternary structure, forms a conjugate with ATG12. Part of the minor complex composed of 4 sets of ATG12-ATG5 and ATG16L1 (400 kDa); this complex interacts with ATG3 leading to disruption of ATG7 interaction and promotion of ATG8-like proteins lipidation. Forms an 800-kDa complex composed of ATG12-ATG5 and ATG16L2. The ATG12-ATG5 conjugate interacts with RAB33A; this interaction is bridged by ATG16L1 and promotes ATG12-ATG5-ATG16L1 complex recruitment to phagophores. Interacts with TECPR1; the interaction is direct and does not take place when ATG16L1 is associated with the ATG5-ATG12 conjugate. Interacts with DHX58/RIG-1, IFIH1/MDA5 and MAVS/IPS-1 in monomeric form as well as in ATG12-ATG5 conjugate form. The interaction with MAVS is further enhanced upon vesicular stomatitis virus (VSV) infection. Interacts with ATG3. Interacts with ATG7 and ATG10. Interacts with FADD. Interacts with Bassoon/BSN; this interaction is important for the regulation of presynaptic autophagy. Interacts with ATG16L2. Conjugated to ATG12; which is essential for autophagy, but is not required for association with isolation membrane. Post-translationally, acetylated by EP300.

The protein resides in the cytoplasm. The protein localises to the preautophagosomal structure membrane. Functionally, involved in autophagic vesicle formation. Conjugation with ATG12, through a ubiquitin-like conjugating system involving ATG7 as an E1-like activating enzyme and ATG10 as an E2-like conjugating enzyme, is essential for its function. The ATG12-ATG5 conjugate acts as an E3-like enzyme which is required for lipidation of ATG8 family proteins and their association to the vesicle membranes. Involved in mitochondrial quality control after oxidative damage, and in subsequent cellular longevity. Plays a critical role in multiple aspects of lymphocyte development and is essential for both B and T lymphocyte survival and proliferation. Required for optimal processing and presentation of antigens for MHC II. Involved in the maintenance of axon morphology and membrane structures, as well as in normal adipocyte differentiation. Promotes primary ciliogenesis through removal of OFD1 from centriolar satellites and degradation of IFT20 via the autophagic pathway. As part of the ATG8 conjugation system with ATG12 and ATG16L1, required for recruitment of LRRK2 to stressed lysosomes and induction of LRRK2 kinase activity in response to lysosomal stress. Its function is as follows. May play an important role in the apoptotic process, possibly within the modified cytoskeleton. Its expression is a relatively late event in the apoptotic process, occurring downstream of caspase activity. Plays a crucial role in IFN-gamma-induced autophagic cell death by interacting with FADD. The protein is Autophagy protein 5 of Sus scrofa (Pig).